We begin with the raw amino-acid sequence, 532 residues long: Phosphoenolpyruvate carboxykinase (ATP) (532 aa).

Residues R60, Y195, and K201 each contribute to the substrate site. ATP contacts are provided by residues K201, H221, and G237 to T245. Residues K201 and H221 each contribute to the Mn(2+) site. Position 258 (D258) interacts with Mn(2+). ATP is bound by residues E287, R323, and T448. R323 is a substrate binding site.

It belongs to the phosphoenolpyruvate carboxykinase (ATP) family. It depends on Mn(2+) as a cofactor.

The protein resides in the cytoplasm. The catalysed reaction is oxaloacetate + ATP = phosphoenolpyruvate + ADP + CO2. It participates in carbohydrate biosynthesis; gluconeogenesis. In terms of biological role, involved in the gluconeogenesis. Catalyzes the conversion of oxaloacetate (OAA) to phosphoenolpyruvate (PEP) through direct phosphoryl transfer between the nucleoside triphosphate and OAA. In Christiangramia forsetii (strain DSM 17595 / CGMCC 1.15422 / KT0803) (Gramella forsetii), this protein is Phosphoenolpyruvate carboxykinase (ATP).